The sequence spans 1021 residues: Ras-related protein Rab-44 (1021 aa).

The segment at 1-40 is disordered; that stretch reads METGQRTSRKVRKLGSNRRRQTREPADGEGAAVAPEPESW. The span at 7–21 shows a compositional bias: basic residues; that stretch reads TSRKVRKLGSNRRRQ. The EF-hand domain maps to 77-112; it reads GSKEESEMIFDWVDVERKGHLSLEEFSSGLKNIFGS. The tract at residues 113–133 is disordered; it reads SQSPHRLRRRKPLPSKRVSAT. Residues 117–126 are compositionally biased toward basic residues; it reads HRLRRRKPLP. Residues 191-315 adopt a coiled-coil conformation; it reads LAKMTSRLQE…AGRLEEVRGQ (125 aa). 3 disordered regions span residues 339 to 405, 419 to 483, and 495 to 827; these read SFPG…QTPR, LFGQ…LLWG, and VLIP…GGPQ. Over residues 443–467 the composition is skewed to basic and acidic residues; that stretch reads KDNKGVDPHEQDIRAEQPVEPHDPD. Residues 501–514 are compositionally biased toward pro residues; the sequence is DGPPPPANSPPPQA. Residues 532 to 559 show a composition bias toward low complexity; it reads PGSWAPPSGAQPGAGAGPQEPTQTPPTM. Residues 676 to 685 show a composition bias toward basic and acidic residues; that stretch reads SEEGKQEGRG. Composition is skewed to polar residues over residues 688 to 697 and 710 to 727; these read DLSSEQSEQS and LPQQDSLLVSLPSATPQA. The segment covering 736 to 759 has biased composition (low complexity); that stretch reads PGKSAPPRGSPPRGAQPGAGAGPQ. A compositionally biased stretch (basic and acidic residues) spans 783–810; that stretch reads HAEEQGPPHSREPRAESRLEDPGMDSRE. GTP is bound by residues 840-847, 888-892, and 946-949; these read GDSNVGKT, DTAGQ, and NKMD. 2 S-geranylgeranyl cysteine lipidation sites follow: Cys1019 and Cys1020.

Belongs to the small GTPase superfamily. Rab family.

It is found in the cell membrane. This is Ras-related protein Rab-44 (RAB44) from Homo sapiens (Human).